Reading from the N-terminus, the 43-residue chain is MLAFCYSLPNAGDVIKGRVYENDYTLYIYLFDYPHSEAILAEC.

Belongs to the orthopoxvirus OPG041 family.

The chain is Truncated K3L homolog (OPG041) from Cynomys gunnisoni (Gunnison's prairie dog).